We begin with the raw amino-acid sequence, 206 residues long: Putative acetyltransferase OgpAT (206 aa).

One can recognise an N-acetyltransferase domain in the interval 5-205; that stretch reads VVIRRATAAD…EVVVGRRLLD (201 aa). Residues 135-138, 144-148, 175-177, and histidine 184 contribute to the acetyl-CoA site; these read HIDL, GRGVG, and NPR.

Belongs to the acetyltransferase family. As to quaternary structure, monomer.

Binds acetyl-CoA, but not butyryl-CoA or decanoyl-CoA. May have acetyltransferase activity. In Oceanicola granulosus (strain ATCC BAA-861 / DSM 15982 / KCTC 12143 / HTCC2516), this protein is Putative acetyltransferase OgpAT.